Reading from the N-terminus, the 786-residue chain is Protein SEY1 (786 aa).

At 1 to 684 (MSDLKEAIQL…KRSIVNTTER (684 aa)) the chain is on the cytoplasmic side. Residues 35 to 262 (GVKYHVISVF…QDASFFKDEY (228 aa)) form the GB1/RHD3-type G domain. A GTP-binding site is contributed by 45–52 (GSQSSGKS). Residues 355–375 (KKVYEERRDDLIKQLNTIIDE) adopt a coiled-coil conformation. A helical transmembrane segment spans residues 685–705 (IPLYMYALVVALGWGRIITIL). At 706 to 708 (RNP) the chain is on the lumenal side. Residues 709–729 (ATIILSIIVLAGAYFVHKLNL) form a helical membrane-spanning segment. The Cytoplasmic segment spans residues 730 to 786 (WGPLLQFANQATGQATAVLKQTVRSLVVDEEPKRKILVEPHESEGVDKEPSKNDQHL). The disordered stretch occupies residues 765–786 (ILVEPHESEGVDKEPSKNDQHL).

This sequence belongs to the TRAFAC class dynamin-like GTPase superfamily. GB1/RHD3 GTPase family. RHD3 subfamily.

Its subcellular location is the endoplasmic reticulum membrane. Functionally, cooperates with the reticulon proteins and tubule-shaping DP1 family proteins to generate and maintain the structure of the tubular endoplasmic reticulum network. Has GTPase activity, which is required for its function in ER organization. This Kluyveromyces lactis (strain ATCC 8585 / CBS 2359 / DSM 70799 / NBRC 1267 / NRRL Y-1140 / WM37) (Yeast) protein is Protein SEY1.